A 177-amino-acid chain; its full sequence is Translation initiation factor IF-3 (177 aa).

This sequence belongs to the IF-3 family. Monomer.

The protein resides in the cytoplasm. In terms of biological role, IF-3 binds to the 30S ribosomal subunit and shifts the equilibrium between 70S ribosomes and their 50S and 30S subunits in favor of the free subunits, thus enhancing the availability of 30S subunits on which protein synthesis initiation begins. The chain is Translation initiation factor IF-3 from Acaryochloris marina (strain MBIC 11017).